Reading from the N-terminus, the 389-residue chain is uncharacterized protein (389 aa).

4 disordered regions span residues 119–156 (SSLFDARKSSRSRGAVIKSPSTINIEKNRHSSNSGENQ), 180–233 (PTSK…SSMG), 294–321 (SIPSGRNSESARSRQTKRSPFGSVTSRT), and 362–389 (PEDMQEEDEKHNGSVWGSDTSLEEEIKV). The span at 137-155 (SPSTINIEKNRHSSNSGEN) shows a compositional bias: polar residues. The segment covering 190-204 (DDGDEEDDTDDEGEA) has biased composition (acidic residues).

This is an uncharacterized protein from Caenorhabditis elegans.